The sequence spans 484 residues: Sucrose-6-phosphate hydrolase (484 aa).

Substrate-binding positions include 48–51, Q67, 110–111, 168–169, and E223; these read LLND, YS, and RD. The active site involves D51.

Belongs to the glycosyl hydrolase 32 family.

It is found in the cytoplasm. The catalysed reaction is Hydrolysis of terminal non-reducing beta-D-fructofuranoside residues in beta-D-fructofuranosides.. It functions in the pathway glycan biosynthesis; sucrose metabolism. Its function is as follows. Enables the bacterium to metabolize sucrose as a sole carbon source. In Vibrio alginolyticus, this protein is Sucrose-6-phosphate hydrolase (scrB).